The chain runs to 539 residues: Capsid protein VP1 (539 aa).

Residues 1 to 221 form a shell domain region; sequence MKMASNDANP…FIFLVPPTVE (221 aa). The tract at residues 222–274 is P1 sub-domain 1; the sequence is SRTKPFTVPVLTVEEMSNSRFPIPLEKLYTGPSSAFVVQPQNGRCTTDGVLLG. The protruding domain stretch occupies residues 222 to 539; that stretch reads SRTKPFTVPV…GNGTGRRRAL (318 aa). Positions 275–417 are P2 sub-domain; the sequence is TTQLSAVNIC…SGRTGHNVHL (143 aa). The P1 sub-domain 2 stretch occupies residues 418–539; that stretch reads APAVAPTFPG…GNGTGRRRAL (122 aa).

This sequence belongs to the caliciviridae capsid protein family. As to quaternary structure, homodimer. Homomultimer. Interacts with the minor capsid protein VP2. Interacts (via C-terminus) with host type I histo-blood group structures antigens at the surface of target cells. Post-translationally, may be cleaved by host protease to generate soluble capsid protein. Assembled capsid cannot be cleaved.

The protein localises to the virion. The protein resides in the host cytoplasm. In terms of biological role, capsid protein self assembles to form an icosahedral capsid with a T=3 symmetry, about 38 nm in diameter, and consisting of 180 capsid proteins. A smaller form of capsid with a diameter of 23 nm might be capsid proteins assembled as icosahedron with T=1 symmetry. The capsid encapsulates the genomic RNA and is decorated with VP2 proteins. Attaches virion to target cells by binding histo-blood group antigens (HBGAs) present on gastroduodenal epithelial cells. Its function is as follows. The soluble capsid protein may play a role in viral immunoevasion. The sequence is that of Capsid protein VP1 from Homo sapiens (Human).